The chain runs to 411 residues: MDYATAIGGVAMFTLIIMGLVAIILAARSRLVSSGDVTIHINDNPENDVVTPAGGKLLQTLASEGIFLSSACGGGGTCAQCRCRVIEGGGSILPTEEGYFTQGEIRNHMRLACQVAVKQDMKIEIDPEFFDVQKWECEVISNDNVATFIKELVLKIPDGEEVNFRAGGYVQLEAPPHEVHYKDFDIAEEYQDDWNNFGIFKYVSKVDEPVIRAYSMANYPDEKGLIKFNIRIASPPPRGPDGIPPGKMSSWTFSLKPGDKVTVSGPYGEFFAKKTEAEMIFVGGGAGMAPMRSHIFDQLKRLNSDRKISFWYGARSIREMFYVEDYDQLEEEFANFEWHVALSDPLPEDNWDGYTGFIHNVLLEEYLKDHPNPEDCEYYMCGPPMMNAAVIDMLHSMGVEDENIMLDDFGG.

The helical transmembrane segment at 6–26 threads the bilayer; that stretch reads AIGGVAMFTLIIMGLVAIILA. Positions 35-129 constitute a 2Fe-2S ferredoxin-type domain; it reads GDVTIHINDN…DMKIEIDPEF (95 aa). [2Fe-2S] cluster contacts are provided by Cys-72, Cys-78, Cys-81, and Cys-113. The 142-residue stretch at 132-273 folds into the FAD-binding FR-type domain; sequence VQKWECEVIS…SGPYGEFFAK (142 aa).

This sequence belongs to the NqrF family. Composed of six subunits; NqrA, NqrB, NqrC, NqrD, NqrE and NqrF. [2Fe-2S] cluster serves as cofactor. Requires FAD as cofactor.

It localises to the cell inner membrane. It catalyses the reaction a ubiquinone + n Na(+)(in) + NADH + H(+) = a ubiquinol + n Na(+)(out) + NAD(+). Its function is as follows. NQR complex catalyzes the reduction of ubiquinone-1 to ubiquinol by two successive reactions, coupled with the transport of Na(+) ions from the cytoplasm to the periplasm. The first step is catalyzed by NqrF, which accepts electrons from NADH and reduces ubiquinone-1 to ubisemiquinone by a one-electron transfer pathway. The sequence is that of Na(+)-translocating NADH-quinone reductase subunit F from Psychrobacter cryohalolentis (strain ATCC BAA-1226 / DSM 17306 / VKM B-2378 / K5).